We begin with the raw amino-acid sequence, 62 residues long: Large ribosomal subunit protein bL32 (62 aa).

The span at 1-16 (MAVPKRKTSPSRRGMR) shows a compositional bias: basic residues. Positions 1 to 62 (MAVPKRKTSP…QILKPKTAEV (62 aa)) are disordered. A compositionally biased stretch (basic and acidic residues) spans 28 to 44 (VEDKDSGELRRPHHLDL).

The protein belongs to the bacterial ribosomal protein bL32 family.

The sequence is that of Large ribosomal subunit protein bL32 from Azorhizobium caulinodans (strain ATCC 43989 / DSM 5975 / JCM 20966 / LMG 6465 / NBRC 14845 / NCIMB 13405 / ORS 571).